The chain runs to 496 residues: Lysine--tRNA ligase (496 aa).

Mg(2+) contacts are provided by Glu409 and Glu416.

Belongs to the class-II aminoacyl-tRNA synthetase family. Homodimer. Requires Mg(2+) as cofactor.

Its subcellular location is the cytoplasm. The catalysed reaction is tRNA(Lys) + L-lysine + ATP = L-lysyl-tRNA(Lys) + AMP + diphosphate. The protein is Lysine--tRNA ligase of Streptococcus suis (strain 05ZYH33).